The chain runs to 319 residues: Ferrochelatase (319 aa).

Residues H194 and E275 each coordinate Fe cation.

This sequence belongs to the ferrochelatase family.

The protein resides in the cytoplasm. It catalyses the reaction heme b + 2 H(+) = protoporphyrin IX + Fe(2+). Its pathway is porphyrin-containing compound metabolism; protoheme biosynthesis; protoheme from protoporphyrin-IX: step 1/1. Functionally, catalyzes the ferrous insertion into protoporphyrin IX. This Vibrio vulnificus (strain CMCP6) protein is Ferrochelatase.